A 186-amino-acid chain; its full sequence is Ribosome-recycling factor (186 aa).

It belongs to the RRF family.

It is found in the cytoplasm. Responsible for the release of ribosomes from messenger RNA at the termination of protein biosynthesis. May increase the efficiency of translation by recycling ribosomes from one round of translation to another. This is Ribosome-recycling factor from Bartonella bacilliformis (strain ATCC 35685 / KC583 / Herrer 020/F12,63).